The following is an 840-amino-acid chain: Leucine--tRNA ligase (840 aa).

Positions 44 to 55 match the 'HIGH' region motif; the sequence is PYPSANGLHVGH. The 'KMSKS' region signature appears at 617–621; that stretch reads KMSKS. Lys-620 contributes to the ATP binding site.

Belongs to the class-I aminoacyl-tRNA synthetase family.

It is found in the cytoplasm. The enzyme catalyses tRNA(Leu) + L-leucine + ATP = L-leucyl-tRNA(Leu) + AMP + diphosphate. In Borreliella afzelii (strain PKo) (Borrelia afzelii), this protein is Leucine--tRNA ligase.